Here is a 1513-residue protein sequence, read N- to C-terminus: Exo-beta-1,6-galactobiohydrolase (1513 aa).

The N-terminal stretch at 1–31 (MRVLSKSLAAMVAAATLVGGGAFAVAGTAYA) is a signal peptide. A Ricin B-type lectin domain is found at 666–801 (VADTTSGDSA…PSANQTWTLR (136 aa)). 2 consecutive F5/8 type C domains span residues 965 to 1112 (AIYV…AFVT) and 1116 to 1273 (GAAK…VFAQ). Residues 1456 to 1480 (VAPGPEEQKPGNTNKPGATGNGNKN) form a disordered region. Over residues 1465–1480 (PGNTNKPGATGNGNKN) the composition is skewed to polar residues. The helical transmembrane segment at 1489–1509 (VAAIAGAVALLAAAAGALFML) threads the bilayer.

This sequence belongs to the glycosyl hydrolase 30 family.

The protein resides in the cell membrane. It catalyses the reaction Hydrolysis of (1-&gt;6)-beta-D-galactosidic linkages in arabinogalactan proteins and (1-&gt;3):(1-&gt;6)-beta-galactans to yield (1-&gt;6)-beta-galactobiose as the final product.. Functionally, involved in the type II arabinogalactan (AG) side chains degradation. Specifically releases the non-reducing terminal beta-1,6-galactobiose (beta-1,6-Gal2) from both dearabinosylated larch AG and polymeric beta-1,6-galactan chains by an exo-mode of action. Shows lower activity with larch AG, and very weak activity with dearabinosylated gum arabic, gum arabic and potato galactan. Can probably release beta-1,6-Gal2 from the internal side chains of type II AG. In Bifidobacterium longum subsp. longum (strain ATCC 15707 / DSM 20219 / JCM 1217 / NCTC 11818 / E194b), this protein is Exo-beta-1,6-galactobiohydrolase.